We begin with the raw amino-acid sequence, 428 residues long: Bifunctional protein GlmU (428 aa).

A pyrophosphorylase region spans residues 1–221; sequence MDIVILAAGC…ERKAMGINTR (221 aa). UDP-N-acetyl-alpha-D-glucosamine-binding positions include 6–9, K20, Q74, 79–80, 103–105, G140, and N219; these read LAAG, GT, and YGD. Residue D105 participates in Mg(2+) binding. N219 contributes to the Mg(2+) binding site. The segment at 222–242 is linker; sequence ADLAIAESYFQCMKRASFLQS. The segment at 243-428 is N-acetyltransferase; sequence GVTLTSPDQV…TTKPEYKTRR (186 aa). Residues R308 and K326 each contribute to the UDP-N-acetyl-alpha-D-glucosamine site. The Proton acceptor role is filled by H338. Residues Y341 and N352 each contribute to the UDP-N-acetyl-alpha-D-glucosamine site. Residues A355, 361–362, A398, and R415 contribute to the acetyl-CoA site; that span reads NY.

The protein in the N-terminal section; belongs to the N-acetylglucosamine-1-phosphate uridyltransferase family. It in the C-terminal section; belongs to the transferase hexapeptide repeat family. Homotrimer. The cofactor is Mg(2+).

The protein localises to the cytoplasm. It carries out the reaction alpha-D-glucosamine 1-phosphate + acetyl-CoA = N-acetyl-alpha-D-glucosamine 1-phosphate + CoA + H(+). The enzyme catalyses N-acetyl-alpha-D-glucosamine 1-phosphate + UTP + H(+) = UDP-N-acetyl-alpha-D-glucosamine + diphosphate. It participates in nucleotide-sugar biosynthesis; UDP-N-acetyl-alpha-D-glucosamine biosynthesis; N-acetyl-alpha-D-glucosamine 1-phosphate from alpha-D-glucosamine 6-phosphate (route II): step 2/2. The protein operates within nucleotide-sugar biosynthesis; UDP-N-acetyl-alpha-D-glucosamine biosynthesis; UDP-N-acetyl-alpha-D-glucosamine from N-acetyl-alpha-D-glucosamine 1-phosphate: step 1/1. It functions in the pathway bacterial outer membrane biogenesis; LPS lipid A biosynthesis. In terms of biological role, catalyzes the last two sequential reactions in the de novo biosynthetic pathway for UDP-N-acetylglucosamine (UDP-GlcNAc). The C-terminal domain catalyzes the transfer of acetyl group from acetyl coenzyme A to glucosamine-1-phosphate (GlcN-1-P) to produce N-acetylglucosamine-1-phosphate (GlcNAc-1-P), which is converted into UDP-GlcNAc by the transfer of uridine 5-monophosphate (from uridine 5-triphosphate), a reaction catalyzed by the N-terminal domain. In Anaplasma marginale (strain Florida), this protein is Bifunctional protein GlmU.